The chain runs to 157 residues: Glutaredoxin-2, mitochondrial (157 aa).

Residues 1–19 constitute a mitochondrion transit peptide; it reads MSWYRAASVGRRLVASGRI. The region spanning 50–150 is the Glutaredoxin domain; the sequence is VNQIQETISN…PLVHQCYLNK (101 aa). C61 serves as a coordination point for [2Fe-2S] cluster. K67 is a binding site for glutathione. C70 carries the post-translational modification S-glutathionyl cysteine; alternate. A disulfide bond links C70 and C73. Glutathione contacts are provided by Q102 and V114. C146 lines the [2Fe-2S] cluster pocket.

It belongs to the glutaredoxin family. In terms of assembly, monomer; active form. Homodimer; inactive form. The homodimer is probably linked by 1 2Fe-2S cluster.

Its subcellular location is the mitochondrion. It localises to the nucleus. The 2Fe-2S present in the homodimer leads to inactivation of the enzyme. The 2Fe-2S may serve as a redox sensor: the presence of one-electron oxidants or reductants leading to the loss of the 2Fe-2S cluster, subsequent monomerization and activation of the enzyme. In terms of biological role, glutathione-dependent oxidoreductase that facilitates the maintenance of mitochondrial redox homeostasis upon induction of apoptosis by oxidative stress. Involved in response to hydrogen peroxide and regulation of apoptosis caused by oxidative stress. Acts as a very efficient catalyst of monothiol reactions because of its high affinity for protein glutathione-mixed disulfides. Can receive electrons not only from glutathione (GSH), but also from thioredoxin reductase supporting both monothiol and dithiol reactions. Efficiently catalyzes both glutathionylation and deglutathionylation of mitochondrial complex I, which in turn regulates the superoxide production by the complex. Overexpression decreases the susceptibility to apoptosis and prevents loss of cardiolipin and cytochrome c release. This Rattus norvegicus (Rat) protein is Glutaredoxin-2, mitochondrial (Glrx2).